Reading from the N-terminus, the 959-residue chain is Glycine dehydrogenase (decarboxylating) (959 aa).

K708 is subject to N6-(pyridoxal phosphate)lysine.

It belongs to the GcvP family. As to quaternary structure, the glycine cleavage system is composed of four proteins: P, T, L and H. It depends on pyridoxal 5'-phosphate as a cofactor.

The enzyme catalyses N(6)-[(R)-lipoyl]-L-lysyl-[glycine-cleavage complex H protein] + glycine + H(+) = N(6)-[(R)-S(8)-aminomethyldihydrolipoyl]-L-lysyl-[glycine-cleavage complex H protein] + CO2. Its function is as follows. The glycine cleavage system catalyzes the degradation of glycine. The P protein binds the alpha-amino group of glycine through its pyridoxal phosphate cofactor; CO(2) is released and the remaining methylamine moiety is then transferred to the lipoamide cofactor of the H protein. The chain is Glycine dehydrogenase (decarboxylating) from Yersinia enterocolitica serotype O:8 / biotype 1B (strain NCTC 13174 / 8081).